Consider the following 365-residue polypeptide: tRNA/tmRNA (uracil-C(5))-methyltransferase (365 aa).

5 residues coordinate S-adenosyl-L-methionine: Gln-189, Tyr-217, Asn-222, Glu-238, and Asp-298. The active-site Nucleophile is Cys-323. Glu-357 acts as the Proton acceptor in catalysis.

It belongs to the class I-like SAM-binding methyltransferase superfamily. RNA M5U methyltransferase family. TrmA subfamily.

The catalysed reaction is uridine(54) in tRNA + S-adenosyl-L-methionine = 5-methyluridine(54) in tRNA + S-adenosyl-L-homocysteine + H(+). The enzyme catalyses uridine(341) in tmRNA + S-adenosyl-L-methionine = 5-methyluridine(341) in tmRNA + S-adenosyl-L-homocysteine + H(+). Functionally, dual-specificity methyltransferase that catalyzes the formation of 5-methyluridine at position 54 (m5U54) in all tRNAs, and that of position 341 (m5U341) in tmRNA (transfer-mRNA). The polypeptide is tRNA/tmRNA (uracil-C(5))-methyltransferase (Shewanella halifaxensis (strain HAW-EB4)).